Consider the following 453-residue polypeptide: Armadillo repeat-containing X-linked protein 1 (453 aa).

The Mitochondrial intermembrane portion of the chain corresponds to 1 to 6 (MGRTRE). Mitochondrion outer membrane (MOM)-targeting sequence stretches follow at residues 1–6 (MGRTRE) and 26–36 (RLAWGRDENEK). The helical; Signal-anchor transmembrane segment at 7–29 (AGCVAAGVVIGAGACYCVYRLAW) threads the bilayer. Residues 30-453 (GRDENEKIWD…VKVLKVLTKL (424 aa)) are Cytoplasmic-facing. 2 disordered regions span residues 58–77 (AKTN…SEVK) and 132–182 (ISGN…RAPA). The span at 167 to 177 (GKSKGKARSKS) shows a compositional bias: basic residues. ARM repeat units follow at residues 195 to 235 (PYKI…NNAA), 237 to 276 (SFNQ…NLSV), 358 to 398 (PAMT…NIND), and 415 to 453 (SSLF…LTKL).

The protein belongs to the eutherian X-chromosome-specific Armcx family. In terms of assembly, interacts with MIRO1. Expressed at high levels ovary, heart, testis, prostate, brain, spleen and colon. Expressed at very low levels in liver and thymus. Not expressed in peripheral blood leukocytes. Not or reduced expressed in lung, prostate, colon, pancreas and ovarian carcinomas.

The protein resides in the mitochondrion. The protein localises to the mitochondrion outer membrane. Functionally, regulates mitochondrial transport during axon regeneration. Increases the proportion of motile mitochondria by recruiting stationary mitochondria into the motile pool. Enhances mitochondria movement and neurite growth in both adult axons and embryonic neurons. Promotes neuronal survival and axon regeneration after nerve injury. May link mitochondria to the Trak1-kinesin motor complex via its interaction with MIRO1. The polypeptide is Armadillo repeat-containing X-linked protein 1 (ARMCX1) (Homo sapiens (Human)).